Reading from the N-terminus, the 366-residue chain is cAMP-dependent protein kinase regulatory subunit (366 aa).

The segment at 1 to 121 is dimerization and phosphorylation; it reads MSGGNEEDQL…SLESAMRKNL (121 aa). The disordered stretch occupies residues 55–87; sequence QRAQEGGNPDAADDDDIIVEPPKRSGGRRTGIS. Positions 82–86 match the Pseudophosphorylation motif motif; the sequence is RRTGI. Ser87 carries the phosphoserine modification. 3',5'-cyclic AMP contacts are provided by residues 122 to 239, Glu187, Arg196, 240 to 366, Glu311, and Arg320; these read LFAH…SKVQ and ILAD…KLMT.

It belongs to the cAMP-dependent kinase regulatory chain family. As to quaternary structure, tetramer, composed of 2 regulatory (R) and 2 catalytic (C) subunits. In the presence of cAMP it dissociates into 2 active monomeric C subunits and an R dimer that binds four cAMP molecules. The pseudophosphorylation site binds to the substrate-binding region of the catalytic chain but is not phosphorylated. The physiological significance of phosphorylations by other kinases is unclear.

Its subcellular location is the cytoplasm. It localises to the cytosol. Controls the rhythmic contraction of enteric muscles probably by regulating G-protein coupled receptor aex-2-mediated calcium influx in GABAergic DVB neurons. This is cAMP-dependent protein kinase regulatory subunit (kin-2) from Caenorhabditis elegans.